The primary structure comprises 366 residues: UDP-N-acetylglucosamine--N-acetylmuramyl-(pentapeptide) pyrophosphoryl-undecaprenol N-acetylglucosamine transferase (366 aa).

UDP-N-acetyl-alpha-D-glucosamine-binding positions include Thr10–Gly12, Asn124, Ser195, and Gln295.

This sequence belongs to the glycosyltransferase 28 family. MurG subfamily.

It localises to the cell membrane. It carries out the reaction di-trans,octa-cis-undecaprenyl diphospho-N-acetyl-alpha-D-muramoyl-L-alanyl-D-glutamyl-meso-2,6-diaminopimeloyl-D-alanyl-D-alanine + UDP-N-acetyl-alpha-D-glucosamine = di-trans,octa-cis-undecaprenyl diphospho-[N-acetyl-alpha-D-glucosaminyl-(1-&gt;4)]-N-acetyl-alpha-D-muramoyl-L-alanyl-D-glutamyl-meso-2,6-diaminopimeloyl-D-alanyl-D-alanine + UDP + H(+). Its pathway is cell wall biogenesis; peptidoglycan biosynthesis. In terms of biological role, cell wall formation. Catalyzes the transfer of a GlcNAc subunit on undecaprenyl-pyrophosphoryl-MurNAc-pentapeptide (lipid intermediate I) to form undecaprenyl-pyrophosphoryl-MurNAc-(pentapeptide)GlcNAc (lipid intermediate II). This is UDP-N-acetylglucosamine--N-acetylmuramyl-(pentapeptide) pyrophosphoryl-undecaprenol N-acetylglucosamine transferase from Bacillus licheniformis (strain ATCC 14580 / DSM 13 / JCM 2505 / CCUG 7422 / NBRC 12200 / NCIMB 9375 / NCTC 10341 / NRRL NRS-1264 / Gibson 46).